We begin with the raw amino-acid sequence, 217 residues long: NADPH-dependent 3-demethoxyubiquinone 3-hydroxylase, mitochondrial (217 aa).

The transit peptide at 1–34 directs the protein to the mitochondrion; sequence MSCARALAACCLWRLRTGALQPLSAYGRRISVRF. 2 repeat units span residues 48–129 and 130–217. The tract at residues 48–217 is 2 X approximate tandem repeats; that stretch reads AVDRIIRVDH…KVAIYLSERL (170 aa). Arg-51 provides a ligand contact to NADH. Glu-60, Glu-90, His-93, Glu-142, Glu-178, and His-181 together coordinate Fe cation. Residues Lys-208, Tyr-212, and Arg-216 each contribute to the NADH site.

Belongs to the COQ7 family. As to quaternary structure, component of a multi-subunit COQ enzyme complex. Interacts with COQ8B and COQ6. Interacts with COQ9. Fe cation serves as cofactor.

The protein localises to the mitochondrion inner membrane. The enzyme catalyses a 5-methoxy-2-methyl-3-(all-trans-polyprenyl)benzoquinone + NADH + O2 = a 3-demethylubiquinone + NAD(+) + H2O. It functions in the pathway cofactor biosynthesis; ubiquinone biosynthesis. Catalyzes the hydroxylation of the 5-methoxy-2-methyl-3-(all-trans-polyprenyl)benzoquinone at the C6 position and participates in the biosynthesis of ubiquinone. Catalyzes the reaction through a substrate-mediated reduction pathway, whereby NADH shuttles electrons to 5-methoxy-2-methyl-3-(all-trans-decaprenyl)benzoquinone, which then transfers the electrons to the two Fe(3+) centers. The binding of 5-methoxy-2-methyl-3-(all-trans-polyprenyl)benzoquinone (DMQn) mediates reduction of the diiron center by nicotinamide adenine dinucleotide (NADH) and initiates oxygen activation for subsequent DMQ hydroxylation. The physiological substrates are 5-methoxy-2-methyl-3-(all-trans-nonaprenyl)benzoquinone (DMQ(9)) and 5-methoxy-2-methyl-3-(all-trans-decaprenyl)benzoquinone (DMQ(10)), however in vitro the enzyme does not have any specificity concerning the length of the polyprenyl tail, and accepts tails of various lengths with similar efficiency. Also has a structural role in the COQ enzyme complex, stabilizing other COQ polypeptides. Involved in lifespan determination in a ubiquinone-independent manner. Plays a role in modulating mitochondrial stress responses, acting in the nucleus, perhaps via regulating gene expression, independent of its characterized mitochondrial function in ubiquinone biosynthesis. The polypeptide is NADPH-dependent 3-demethoxyubiquinone 3-hydroxylase, mitochondrial (Bos taurus (Bovine)).